The sequence spans 359 residues: Cytoplasmic tRNA 2-thiolation protein 2 (359 aa).

It belongs to the CTU2/NCS2 family.

It is found in the cytoplasm. The protein operates within tRNA modification; 5-methoxycarbonylmethyl-2-thiouridine-tRNA biosynthesis. In terms of biological role, plays a central role in 2-thiolation of mcm(5)S(2)U at tRNA wobble positions of tRNA(Lys), tRNA(Glu) and tRNA(Gln). May act by forming a heterodimer with NCS6 that ligates sulfur from thiocarboxylated URM1 onto the uridine of tRNAs at wobble position. Prior mcm(5) tRNA modification by the elongator complex is required for 2-thiolation. May also be involved in protein urmylation. The protein is Cytoplasmic tRNA 2-thiolation protein 2 of Ajellomyces capsulatus (strain NAm1 / WU24) (Darling's disease fungus).